The following is a 124-amino-acid chain: MAALGMLLSTGVRRLHCGSAARAGSQWRLRQGLAANPSGYGPLTELPDWSYADGRPAPPMKGQLRRKAQREKFARRVVLLSQEMDAGLQAWQLRQQEKLQEEKRKQQNALKPKGVLLQNPGPSQ.

Residues 1 to 23 (MAALGMLLSTGVRRLHCGSAARA) constitute a mitochondrion transit peptide. Residues 99 to 124 (LQEEKRKQQNALKPKGVLLQNPGPSQ) are disordered.

Belongs to the mitochondrion-specific ribosomal protein mL52 family. As to quaternary structure, component of the mitochondrial ribosome large subunit (39S) which comprises a 16S rRNA and about 50 distinct proteins.

The protein localises to the mitochondrion. The sequence is that of Large ribosomal subunit protein mL52 (MRPL52) from Bos taurus (Bovine).